We begin with the raw amino-acid sequence, 233 residues long: Large ribosomal subunit protein uL1 (233 aa).

This sequence belongs to the universal ribosomal protein uL1 family. In terms of assembly, part of the 50S ribosomal subunit.

In terms of biological role, binds directly to 23S rRNA. The L1 stalk is quite mobile in the ribosome, and is involved in E site tRNA release. Protein L1 is also a translational repressor protein, it controls the translation of the L11 operon by binding to its mRNA. The polypeptide is Large ribosomal subunit protein uL1 (Geotalea daltonii (strain DSM 22248 / JCM 15807 / FRC-32) (Geobacter daltonii)).